Reading from the N-terminus, the 536-residue chain is Lysosomal acid glucosylceramidase (536 aa).

The first 39 residues, 1–39 (MEFSSPSREECPKPSGRVSIMAGSLTGLLLLQAVSWASG), serve as a signal peptide directing secretion. Intrachain disulfides connect Cys43–Cys55 and Cys57–Cys62. 3 N-linked (GlcNAc...) asparagine glycosylation sites follow: Asn58, Asn98, and Asn185. Glu274 (proton donor) is an active-site residue. N-linked (GlcNAc...) asparagine glycosylation is present at Asn309. Glu379 functions as the Nucleophile in the catalytic mechanism. N-linked (GlcNAc...) asparagine glycosylation is present at Asn501.

This sequence belongs to the glycosyl hydrolase 30 family. As to quaternary structure, interacts with saposin-C. Interacts with SCARB2. Interacts with TCP1. Interacts with GRN; this interaction prevents aggregation of GBA1-SCARB2 complex via interaction with HSPA1A upon stress.

Its subcellular location is the lysosome membrane. The catalysed reaction is a beta-D-glucosyl-(1&lt;-&gt;1')-N-acylsphing-4-enine + H2O = an N-acylsphing-4-enine + D-glucose. The enzyme catalyses a beta-D-galactosyl-(1&lt;-&gt;1')-N-acylsphing-4-enine + H2O = an N-acylsphing-4-enine + D-galactose. It carries out the reaction cholesteryl 3-beta-D-glucoside + H2O = cholesterol + D-glucose. It catalyses the reaction a beta-D-glucosyl-(1&lt;-&gt;1')-N-acylsphing-4-enine + cholesterol = cholesteryl 3-beta-D-glucoside + an N-acylsphing-4-enine. The catalysed reaction is beta-D-glucosyl-N-(9Z-octadecenoyl)-sphing-4E-enine + cholesterol = N-(9Z-octadecenoyl)-sphing-4-enine + cholesteryl 3-beta-D-glucoside. The enzyme catalyses beta-D-glucosyl-N-octanoylsphing-4E-enine + cholesterol = N-octanoylsphing-4-enine + cholesteryl 3-beta-D-glucoside. It carries out the reaction beta-D-glucosyl-N-dodecanoylsphing-4-enine + cholesterol = N-dodecanoylsphing-4-enine + cholesteryl 3-beta-D-glucoside. It catalyses the reaction beta-D-glucosyl-(1&lt;-&gt;1)-N-octadecanoylsphing-4-enine + cholesterol = N-octadecanoylsphing-4-enine + cholesteryl 3-beta-D-glucoside. The catalysed reaction is beta-D-glucosyl-(1&lt;-&gt;1')-N-(15Z-tetracosenoyl)-sphing-4-enine + cholesterol = N-(15Z-tetracosenoyl)-sphing-4-enine + cholesteryl 3-beta-D-glucoside. The enzyme catalyses a beta-D-galactosyl-(1&lt;-&gt;1')-N-acylsphing-4-enine + cholesterol = cholesteryl 3-beta-D-galactoside + an N-acylsphing-4-enine. It carries out the reaction 1-(beta-D-galactosyl)-N-dodecanoylsphing-4-enine + cholesterol = cholesteryl 3-beta-D-galactoside + N-dodecanoylsphing-4-enine. It catalyses the reaction a beta-D-xylosyl-(1&lt;-&gt;1')-N-acylsphing-4-enine + cholesterol = cholesteryl 3-beta-D-xyloside + an N-acylsphing-4-enine. The catalysed reaction is beta-D-xylosyl-(1&lt;-&gt;1')-N-(9Z-octadecenoyl)-sphing-4-enine + cholesterol = cholesteryl 3-beta-D-xyloside + N-(9Z-octadecenoyl)-sphing-4-enine. The protein operates within steroid metabolism; cholesterol metabolism. It participates in sphingolipid metabolism. In terms of biological role, glucosylceramidase that catalyzes, within the lysosomal compartment, the hydrolysis of glucosylceramides/GlcCers (such as beta-D-glucosyl-(1&lt;-&gt;1')-N-acylsphing-4-enine) into free ceramides (such as N-acylsphing-4-enine) and glucose. Plays a central role in the degradation of complex lipids and the turnover of cellular membranes. Through the production of ceramides, participates in the PKC-activated salvage pathway of ceramide formation. Catalyzes the glucosylation of cholesterol, through a transglucosylation reaction where glucose is transferred from GlcCer to cholesterol. GlcCer containing mono-unsaturated fatty acids (such as beta-D-glucosyl-N-(9Z-octadecenoyl)-sphing-4-enine) are preferred as glucose donors for cholesterol glucosylation when compared with GlcCer containing same chain length of saturated fatty acids (such as beta-D-glucosyl-N-octadecanoyl-sphing-4-enine). Under specific conditions, may alternatively catalyze the reverse reaction, transferring glucose from cholesteryl 3-beta-D-glucoside to ceramide. Can also hydrolyze cholesteryl 3-beta-D-glucoside producing glucose and cholesterol. Catalyzes the hydrolysis of galactosylceramides/GalCers (such as beta-D-galactosyl-(1&lt;-&gt;1')-N-acylsphing-4-enine), as well as the transfer of galactose between GalCers and cholesterol in vitro, but with lower activity than with GlcCers. Contrary to GlcCer and GalCer, xylosylceramide/XylCer (such as beta-D-xyosyl-(1&lt;-&gt;1')-N-acylsphing-4-enine) is not a good substrate for hydrolysis, however it is a good xylose donor for transxylosylation activity to form cholesteryl 3-beta-D-xyloside. The polypeptide is Lysosomal acid glucosylceramidase (GBA1) (Pan troglodytes (Chimpanzee)).